The following is a 164-amino-acid chain: Glutamate uptake regulatory protein (164 aa).

One can recognise an HTH asnC-type domain in the interval 5–66 (LDDFDIKILD…LLDPQKIGLG (62 aa)). Positions 24 to 43 (MAELSEKTGLSANACWRRIR) form a DNA-binding region, H-T-H motif.

Functionally, represses the secondary, H(+)-coupled glutamate uptake system (Gluemp) genes. The sequence is that of Glutamate uptake regulatory protein (grp) from Zymomonas mobilis subsp. mobilis (strain ATCC 10988 / DSM 424 / LMG 404 / NCIMB 8938 / NRRL B-806 / ZM1).